The sequence spans 198 residues: Inner membrane-spanning protein YciB (198 aa).

A run of 5 helical transmembrane segments spans residues 36–56 (IFSA…ILYI), 67–87 (LTLV…SETF), 90–110 (WKAP…HFIG), 133–153 (LNIA…YVAF), and 162–182 (FKVF…GIYL).

This sequence belongs to the YciB family.

The protein resides in the cell inner membrane. Functionally, plays a role in cell envelope biogenesis, maintenance of cell envelope integrity and membrane homeostasis. This is Inner membrane-spanning protein YciB from Pseudomonas syringae pv. tomato (strain ATCC BAA-871 / DC3000).